The chain runs to 380 residues: Carbonic anhydrase 2 (380 aa).

Residues 1–20 form the signal peptide; sequence MARTGALLLAALALAGCAQA. The region spanning 38-322 is the Alpha-carbonic anhydrase domain; that stretch reads DHWDHSLNGE…HHHRRLLHNH (285 aa). Cystine bridges form between cysteine 61/cysteine 264, cysteine 194/cysteine 198, and cysteine 296/cysteine 354. An N-linked (GlcNAc...) asparagine glycan is attached at asparagine 101. Catalysis depends on histidine 112, which acts as the Proton acceptor. The N-linked (GlcNAc...) asparagine glycan is linked to asparagine 135. 3 residues coordinate Zn(2+): histidine 163, histidine 165, and histidine 182. Position 260–261 (260–261) interacts with substrate; it reads TT. Asparagine 297 carries an N-linked (GlcNAc...) asparagine glycan.

This sequence belongs to the alpha-carbonic anhydrase family. In terms of assembly, tetramer of two large and two small subunits linked by two disulfide bonds. Requires Zn(2+) as cofactor.

The protein localises to the periplasm. The catalysed reaction is hydrogencarbonate + H(+) = CO2 + H2O. Its function is as follows. Reversible hydration of carbon dioxide. The protein is Carbonic anhydrase 2 (CAH2) of Chlamydomonas reinhardtii (Chlamydomonas smithii).